Here is a 1434-residue protein sequence, read N- to C-terminus: MQNNKNYTEKFITDKVMRRDYSKIKSNFEGPNLLEIQVESFKRFMEKDLKEVISSIFPLKSPQGKYTLAFKGLKIKQPTKDESACRDEGKTFETPIYIDLELTDNYTGEVKRAQRNTKTGEDGIYLGAIPKMTEKGTFVINGIEKFVISQIVRSPGIYVLGKSSIKLNGSRKRLFEGKICEIYPSKGTLMLGYIPKDRHNIQIVARDSSGDNAQTFSVTTLLKAFGLTSAEILKIFNNEKEIRESLEIEKYAPEYIFENSQENEIIFKIYSDAHDIHEKADRRESNNKLKEEYIEQGSPLLSKLKQLIFNYVEKNDEIDALLHENKDVEDASFIKNNKKLYDEREEIINCIISEKAAKDIVELLGINIKNIETLRHLGKASYQIALQQHFFNKRLYDISSAGRYKFEKKLLLSERLYQKVIANDIIDKKNNILIPKDTLITKEHIELIKKESRDKNIKWTKKINLLPTALESEIEQFLEYESIAVYKDNDLRDETTEIVGLASGCKLQTLTVADLVATTSYIYNLNYEIGEFDDIDHLGNKRLKLIHELLRARIATSMARIEKFINEKLAISDGSSNNITNVNDKGIDTELDREIEESDMSDEEKKKAISVKSIINTKQFQSLVKDFFNSHQLIQFIDQQNPLAELTNKRRISAMGPGGISREDPNLDIRDVHHSHYSRICPIETPEGMNIGLIMSLASLAKVDENGFIVAPYYVVEDGVVKEDYKYLTAHEDDNYIIAESSVQLDENKRILDEQVVARYRGSTGLFSPNEVDFIDIVPKQVVSIAASAIPFIENDDGARALMGSNMQRQATPLIKPYAPIVGTGTEFKIAHDSGMAVVAKNDGVVEFVDSQKIIIRNDNDKLDDYKLIKYRKSNQDTCNNQIPIVKVGQRVHKSETIGDGPAMQNGELALGRNILVGYTTWRGYNFEDAIIISERLVDQDVFTSIHIDEHTIQCMKTKNGDEEITRDMPNVSDTAKRFLDNQGIVLVGAEVHEGDVLVGKTTPRGNVETAPEDRLLQTIFGDKSKTVKDSSLKVKHGQEGIVAAVKRIKSSDENGSELPDDVIEIIKVYIVQKRKIQVGDKMAGRHGNKGIVSKVVPIQDMPFLKDGTPLDIMLNPLGVPSRMNIGQILELHLGYAAAEIGKKQLIQIAIDQLGYEKYISLFGINEIIAKKLYENISNLIKHKQAKQAKDIDLIDVTIILKELGLSYDDIGIKISTPVFDGANHDDIVSIMNEANIDIENNKGKQVLYDGRTGEPFDGLISVGLTYMLKLDHMVDDKIHSRSVGPYSKITQQPLGGKSQNGGQRFGEMEVWALEAYGAAYNLLEILTIKSDDVQGRNQAYNAIIKGHDVVADGMPESFKLLTKQMQGLGLCITVETKDDRMVDINEYTLNQNRLNNDDDEVILDENLKEINDSNEEIFNTNFNNNDYDDEENF.

The protein belongs to the RNA polymerase beta chain family. In terms of assembly, the RNAP catalytic core consists of 2 alpha, 1 beta, 1 beta' and 1 omega subunit. When a sigma factor is associated with the core the holoenzyme is formed, which can initiate transcription.

The enzyme catalyses RNA(n) + a ribonucleoside 5'-triphosphate = RNA(n+1) + diphosphate. Functionally, DNA-dependent RNA polymerase catalyzes the transcription of DNA into RNA using the four ribonucleoside triphosphates as substrates. In Ureaplasma parvum serovar 3 (strain ATCC 27815 / 27 / NCTC 11736), this protein is DNA-directed RNA polymerase subunit beta.